A 454-amino-acid polypeptide reads, in one-letter code: LETM1 domain-containing protein YLH47, mitochondrial (454 aa).

Residues 1–45 constitute a mitochondrion transit peptide; sequence MLKYRSLPIKRAIHHPAPGITPISPRIMVSRLRVIPSFNLKFNRW. Over 46-136 the chain is Mitochondrial intermembrane; the sequence is NSSVPESSKK…LKRTTQDIVR (91 aa). The segment at 51–73 is disordered; the sequence is ESSKKELKTTDGNQESASKVSPV. The helical transmembrane segment at 137 to 157 threads the bilayer; that stretch reads LVPFAAFLIIPFAELLLPFAL. At 158–454 the chain is on the mitochondrial matrix side; the sequence is KLFPNLLPST…IGEAAAIKEK (297 aa). The region spanning 177–371 is the Letm1 RBD domain; the sequence is KLENLRNTRK…LCDVLIGIPD (195 aa). Residues 376–423 adopt a coiled-coil conformation; sequence EVKVNVVKEDEASAKQKLKQLREQEEIMKEEEQQEENAIVSVKDELSL. Composition is skewed to basic and acidic residues over residues 420-430 and 437-454; these read ELSLDDQDKNI and VKPHDTKPIGEAAAIKEK. The interval 420–454 is disordered; that stretch reads ELSLDDQDKNIDAAAPDVKPHDTKPIGEAAAIKEK.

As to quaternary structure, associates with the mitochondrial ribosomes.

It localises to the mitochondrion inner membrane. In terms of biological role, involved in mitochondrial potassium homeostasis through the mitochondrial K(+)/H(+) exchange regulation. The polypeptide is LETM1 domain-containing protein YLH47, mitochondrial (YLH47) (Saccharomyces cerevisiae (strain ATCC 204508 / S288c) (Baker's yeast)).